Here is a 327-residue protein sequence, read N- to C-terminus: G protein pathway suppressor 2 (327 aa).

Positions 14 to 109 (MARALHRHIM…RRRKEQSDLT (96 aa)) form a coiled coil. Positions 26-65 (RERKRQEEEEVDKMMEQKMKEEQERRKKKEMEERMSLEET) are disordered. Glycyl lysine isopeptide (Lys-Gly) (interchain with G-Cter in SUMO1) cross-links involve residues Lys-45 and Lys-71. An interaction with SUMO region spans residues 61 to 94 (SLEETKEQILKLEEKLLALQEEKHQLFLQLKKVL). Disordered stretches follow at residues 177–208 (HGQFQGSPGGAYGTAQPPPHYGPTQPAYSPSQ) and 253–327 (QKQM…FYHK). A compositionally biased stretch (polar residues) spans 253-271 (QKQMEHANQQTGFSDSSSL). Arg-312 is modified (asymmetric dimethylarginine). Residues 317 to 327 (QHSQNPRFYHK) are compositionally biased toward polar residues. The residue at position 323 (Arg-323) is an Asymmetric dimethylarginine; alternate. Residue Arg-323 is modified to Omega-N-methylarginine; alternate.

Component of the N-Cor repressor complex, at least composed of NCOR1, NCOR2, HDAC3, TBL1X, TBL1R, CORO2A and GPS2. Interacts (when sumoylated at Lys-71) with TBL1X; leading to protect GPS2 from degradation by the proteasome. Interacts with UBE2N; leading to inhibit UBE2N/Ubc13 activity. Interacts with TRAF1. Interacts with TRAF2. Interacts with TRAF6. Interacts with PPARG (when in the liganded conformation). Interacts with (sumoylated) NR1H2; interaction with sumoylated NR1H2 and NR5A2 onto hepatic acute phase protein promoters prevents N-Cor corepressor complex dissociation. Interacts with (sumoylated) NR5A2; interaction with sumoylated NR1H2 and NR5A2 onto hepatic acute phase protein promoters prevents N-Cor corepressor complex dissociation. Interacts with NR1H3. Interacts with RFX4. Interacts with ANKRD26. In terms of assembly, (Microbial infection) Interacts (via coiled coil domain) with hepatitis C virus (HCV) NS5A. Post-translationally, sumoylation regulates its subcellular location. Sumoylation at Lys-45 and Lys-71 regulates the shuttling between the cytoplasm and the nucleus. Sumoylation at Lys-71 is required for interaction with TBL1X. Sumoylated at Lys-45 and Lys-71 in mitochondrion. Desumoylation by SENP1 leads to relocation from the mitochondria to the nucleus. Ubiquitinated at the C-terminus by SIAH2; leading to its degradation by the proteasome. Interaction with TBL1X and methylation at Arg-323 protect GPS2 against ubiquitination and degradation. In terms of processing, methylated at Arg-312 and Arg-323 by PRMT6. Methylation at Arg-323 protects from degradation by the proteasome. In terms of tissue distribution, widely expressed.

It localises to the nucleus. The protein resides in the mitochondrion. The protein localises to the cytoplasm. It is found in the cytosol. Its function is as follows. Key regulator of inflammation, lipid metabolism and mitochondrion homeostasis that acts by inhibiting the activity of the ubiquitin-conjugating enzyme UBE2N/Ubc13, thereby inhibiting 'Lys-63'-linked ubiquitination. In the nucleus, can both acts as a corepressor and coactivator of transcription, depending on the context. Acts as a transcription coactivator in adipocytes by promoting the recruitment of PPARG to promoters: acts by inhibiting the activity of the ubiquitin-conjugating enzyme UBE2N/Ubc13, leading to stabilization of KDM4A and subsequent histone H3 'Lys-9' (H3K9) demethylation. Promotes cholesterol efflux by acting as a transcription coactivator. Acts as a regulator of B-cell development by inhibiting UBE2N/Ubc13, thereby restricting the activation of Toll-like receptors (TLRs) and B-cell antigen receptors (BCRs) signaling pathways. Acts as a key mediator of mitochondrial stress response: in response to mitochondrial depolarization, relocates from the mitochondria to the nucleus following desumoylation and specifically promotes expression of nuclear-encoded mitochondrial genes. Promotes transcription of nuclear-encoded mitochondrial genes by inhibiting UBE2N/Ubc13. Can also act as a corepressor as part of the N-Cor repressor complex by repressing active PPARG. Plays an anti-inflammatory role in macrophages and is required for insulin sensitivity by acting as a corepressor. Plays an anti-inflammatory role during the hepatic acute phase response by interacting with sumoylated NR1H2 and NR5A2 proteins, thereby preventing N-Cor corepressor complex dissociation. In the cytosol, also plays a non-transcriptional role by regulating insulin signaling and pro-inflammatory pathways. In the cytoplasm, acts as a negative regulator of inflammation by inhibiting the pro-inflammatory TNF-alpha pathway; acts by repressing UBE2N/Ubc13 activity. In the cytoplasm of adipocytes, restricts the activation of insulin signaling via inhibition of UBE2N/Ubc13-mediated ubiquitination of AKT. Able to suppress G-protein- and mitogen-activated protein kinase-mediated signal transduction. Acts as a tumor-suppressor in liposarcoma. (Microbial infection) Required for efficient replication of hepatitis C virus (HCV) by promoting the interaction between VAPA and HCV virus protein NS5A. The protein is G protein pathway suppressor 2 of Homo sapiens (Human).